The primary structure comprises 53 residues: Large ribosomal subunit protein bL33A (53 aa).

Belongs to the bacterial ribosomal protein bL33 family.

This is Large ribosomal subunit protein bL33A (rpmG1) from Mycoplasma genitalium (strain ATCC 33530 / DSM 19775 / NCTC 10195 / G37) (Mycoplasmoides genitalium).